Reading from the N-terminus, the 383-residue chain is Acetylornithine deacetylase (383 aa).

A Zn(2+)-binding site is contributed by histidine 80. Aspartate 82 is an active-site residue. Residue aspartate 112 coordinates Zn(2+). The active site involves glutamate 144. Glutamate 145, glutamate 169, and histidine 355 together coordinate Zn(2+).

It belongs to the peptidase M20A family. ArgE subfamily. Homodimer. Zn(2+) is required as a cofactor. Requires Co(2+) as cofactor. Glutathione serves as cofactor.

It is found in the cytoplasm. The enzyme catalyses N(2)-acetyl-L-ornithine + H2O = L-ornithine + acetate. Its pathway is amino-acid biosynthesis; L-arginine biosynthesis; L-ornithine from N(2)-acetyl-L-ornithine (linear): step 1/1. In terms of biological role, catalyzes the hydrolysis of the amide bond of N(2)-acetylated L-amino acids. Cleaves the acetyl group from N-acetyl-L-ornithine to form L-ornithine, an intermediate in L-arginine biosynthesis pathway, and a branchpoint in the synthesis of polyamines. In Erwinia tasmaniensis (strain DSM 17950 / CFBP 7177 / CIP 109463 / NCPPB 4357 / Et1/99), this protein is Acetylornithine deacetylase.